The sequence spans 262 residues: Type III pantothenate kinase (262 aa).

Residue 6 to 13 participates in ATP binding; that stretch reads DVGNTNAV. Substrate-binding positions include Tyr100 and 107-110; that span reads GADR. The active-site Proton acceptor is Asp109. A K(+)-binding site is contributed by Asp129. Thr132 is an ATP binding site. Thr184 is a binding site for substrate.

This sequence belongs to the type III pantothenate kinase family. In terms of assembly, homodimer. NH4(+) is required as a cofactor. It depends on K(+) as a cofactor.

The protein resides in the cytoplasm. The catalysed reaction is (R)-pantothenate + ATP = (R)-4'-phosphopantothenate + ADP + H(+). The protein operates within cofactor biosynthesis; coenzyme A biosynthesis; CoA from (R)-pantothenate: step 1/5. Catalyzes the phosphorylation of pantothenate (Pan), the first step in CoA biosynthesis. This chain is Type III pantothenate kinase, found in Bacillus anthracis (strain A0248).